The sequence spans 434 residues: ATP-dependent protease ATPase subunit HslU (434 aa).

ATP is bound by residues valine 18, 60–65, aspartate 247, glutamate 312, and arginine 384; that span reads GVGKTE.

Belongs to the ClpX chaperone family. HslU subfamily. A double ring-shaped homohexamer of HslV is capped on each side by a ring-shaped HslU homohexamer. The assembly of the HslU/HslV complex is dependent on binding of ATP.

The protein resides in the cytoplasm. In terms of biological role, ATPase subunit of a proteasome-like degradation complex; this subunit has chaperone activity. The binding of ATP and its subsequent hydrolysis by HslU are essential for unfolding of protein substrates subsequently hydrolyzed by HslV. HslU recognizes the N-terminal part of its protein substrates and unfolds these before they are guided to HslV for hydrolysis. The chain is ATP-dependent protease ATPase subunit HslU from Bradyrhizobium sp. (strain ORS 278).